Reading from the N-terminus, the 295-residue chain is MDQKQIEEIVRSVMASMGQAAPAPSEAKCATTTCAAPVTSESCALDLGSAEAKAWIGVENPHRADVLTELRRSTVARVCTGRAGPRPRTQALLRFLADHSRSKDTVLKEVPEEWVKAQGLLEVRSEISDKNLYLTRPDMGRRLCAEAVEALKAQCVANPDVQVVISDGLSTDAITVNYEEILPPLMAGLKQAGLKVGTPFFVRYGRVKIEDQIGEILGAKVVILLVGERPGLGQSESLSCYAVYSPRMATTVEADRTCISNIHQGGTPPVEAAAVIVDLAKRMLEQKASGINMTR.

Val-207, Glu-228, and Cys-258 together coordinate adenosylcob(III)alamin.

The protein belongs to the EutC family. As to quaternary structure, the basic unit is a heterodimer which dimerizes to form tetramers. The heterotetramers trimerize; 6 large subunits form a core ring with 6 small subunits projecting outwards. Adenosylcob(III)alamin is required as a cofactor.

It is found in the bacterial microcompartment. It catalyses the reaction ethanolamine = acetaldehyde + NH4(+). The protein operates within amine and polyamine degradation; ethanolamine degradation. Its function is as follows. Catalyzes the deamination of various vicinal amino-alcohols to oxo compounds. Allows this organism to utilize ethanolamine as the sole source of nitrogen and carbon in the presence of external vitamin B12. This chain is Ethanolamine ammonia-lyase small subunit, found in Escherichia coli O7:K1 (strain IAI39 / ExPEC).